Here is an 826-residue protein sequence, read N- to C-terminus: Eukaryotic translation initiation factor 3 subunit C (826 aa).

Disordered regions lie at residues 1–71 (MSRF…GKGA) and 205–227 (SGGDVAEEEEEENKEDKPKPRAK). Acidic residues predominate over residues 10-20 (DSDDSSSDEDL). Positions 21–30 (YGSGSESGSD) are enriched in low complexity. Acidic residues predominate over residues 32 to 65 (SQDEQDGGDDNDDDMSDDSMFADDSDDDSDDDED). Residues 218 to 227 (KEDKPKPRAK) are compositionally biased toward basic and acidic residues. In terms of domain architecture, PCI spans 605-779 (FHTHINLELL…NSVVFTQAVQ (175 aa)).

The protein belongs to the eIF-3 subunit C family. In terms of assembly, component of the eukaryotic translation initiation factor 3 (eIF-3) complex.

Its subcellular location is the cytoplasm. Its function is as follows. Component of the eukaryotic translation initiation factor 3 (eIF-3) complex, which is involved in protein synthesis of a specialized repertoire of mRNAs and, together with other initiation factors, stimulates binding of mRNA and methionyl-tRNAi to the 40S ribosome. The eIF-3 complex specifically targets and initiates translation of a subset of mRNAs involved in cell proliferation. This is Eukaryotic translation initiation factor 3 subunit C from Yarrowia lipolytica (strain CLIB 122 / E 150) (Yeast).